The following is a 216-amino-acid chain: Orotate phosphoribosyltransferase (216 aa).

Residue lysine 30 coordinates 5-phospho-alpha-D-ribose 1-diphosphate. Phenylalanine 38–phenylalanine 39 is an orotate binding site. Residues tyrosine 75–lysine 76, arginine 102, lysine 103, lysine 106, histidine 108, and aspartate 128–alanine 136 each bind 5-phospho-alpha-D-ribose 1-diphosphate. The orotate site is built by threonine 132 and arginine 160.

Belongs to the purine/pyrimidine phosphoribosyltransferase family. PyrE subfamily. Homodimer. The cofactor is Mg(2+).

It catalyses the reaction orotidine 5'-phosphate + diphosphate = orotate + 5-phospho-alpha-D-ribose 1-diphosphate. It participates in pyrimidine metabolism; UMP biosynthesis via de novo pathway; UMP from orotate: step 1/2. In terms of biological role, catalyzes the transfer of a ribosyl phosphate group from 5-phosphoribose 1-diphosphate to orotate, leading to the formation of orotidine monophosphate (OMP). The chain is Orotate phosphoribosyltransferase from Acinetobacter baumannii (strain ACICU).